Reading from the N-terminus, the 124-residue chain is Urease subunit beta (124 aa).

Belongs to the urease beta subunit family. In terms of assembly, heterotrimer of UreA (gamma), UreB (beta) and UreC (alpha) subunits. Three heterotrimers associate to form the active enzyme.

The protein localises to the cytoplasm. It catalyses the reaction urea + 2 H2O + H(+) = hydrogencarbonate + 2 NH4(+). It participates in nitrogen metabolism; urea degradation; CO(2) and NH(3) from urea (urease route): step 1/1. The polypeptide is Urease subunit beta (Bacillus subtilis (strain 168)).